The following is a 90-amino-acid chain: Carboxysome shell vertex protein CsoS4A (90 aa).

The 78-residue stretch at 1–78 (MKIYKVDKTL…SDLTIVGIID (78 aa)) folds into the BMV domain.

This sequence belongs to the CcmL/EutN family. CsoS4 subfamily. As to quaternary structure, homopentamer.

Its subcellular location is the carboxysome. In terms of biological role, probably forms vertices in the carboxysome, a polyhedral inclusion where RuBisCO (ribulose bisphosphate carboxylase, cbbL-cbbS) is sequestered. Has been modeled to induce curvature upon insertion into an otherwise flat hexagonal layer of major carboxysome subunits. The chain is Carboxysome shell vertex protein CsoS4A from Hydrogenovibrio crunogenus (strain DSM 25203 / XCL-2) (Thiomicrospira crunogena).